The chain runs to 192 residues: Pyridoxine/pyridoxamine 5'-phosphate oxidase (192 aa).

FMN-binding positions include 41 to 46 (RMMLLK), 56 to 57 (FT), R62, K63, and Q85. Residue K46 participates in substrate binding. Residues Y103, R107, and S111 each coordinate substrate. Residues 120-121 (QS) and W165 contribute to the FMN site. 171–173 (RLH) contacts substrate. Position 175 (R175) interacts with FMN.

The protein belongs to the pyridoxamine 5'-phosphate oxidase family. In terms of assembly, homodimer. FMN serves as cofactor.

The catalysed reaction is pyridoxamine 5'-phosphate + O2 + H2O = pyridoxal 5'-phosphate + H2O2 + NH4(+). The enzyme catalyses pyridoxine 5'-phosphate + O2 = pyridoxal 5'-phosphate + H2O2. It participates in cofactor metabolism; pyridoxal 5'-phosphate salvage; pyridoxal 5'-phosphate from pyridoxamine 5'-phosphate: step 1/1. Its pathway is cofactor metabolism; pyridoxal 5'-phosphate salvage; pyridoxal 5'-phosphate from pyridoxine 5'-phosphate: step 1/1. Its function is as follows. Catalyzes the oxidation of either pyridoxine 5'-phosphate (PNP) or pyridoxamine 5'-phosphate (PMP) into pyridoxal 5'-phosphate (PLP). This is Pyridoxine/pyridoxamine 5'-phosphate oxidase from Zymomonas mobilis subsp. mobilis (strain ATCC 31821 / ZM4 / CP4).